Here is a 265-residue protein sequence, read N- to C-terminus: Aquaporin-5 (265 aa).

Topologically, residues 1-12 (MKKEVCSLAFLK) are cytoplasmic. A helical membrane pass occupies residues 13-33 (AVFAEFLATLIFVFFGLASAL). The Extracellular segment spans residues 34–39 (KWPSAL). The helical transmembrane segment at 40–60 (PTILQIALAFGLAIGTLAQAL) threads the bilayer. Topologically, residues 61–65 (GPVSG) are cytoplasmic. The segment at residues 66–74 (GHINPAITL) is an intramembrane region (discontinuously helical). The NPA 1 signature appears at 69-71 (NPA). At 75-87 (ALLVGNQISLLRA) the chain is on the cytoplasmic side. The chain crosses the membrane as a helical span at residues 88 to 108 (VFYVVAQLVGAIAGAGILYGL). Residues 109–126 (APGNARGNLAVNSLNNNT) are Extracellular-facing. A glycan (N-linked (GlcNAc...) asparagine) is linked at N124. The helical transmembrane segment at 127–147 (TPGQAVVVEMILTFQLALCIF) threads the bilayer. Over 148–158 (SSTDSRRTSPV) the chain is Cytoplasmic. Residues 159 to 179 (GSPALSIGLSVTLGHLVGIYF) traverse the membrane as a helical segment. Position 180 (T180) is a topological domain, extracellular. An intramembrane region (discontinuously helical) is located at residues 181 to 191 (GCSMNPARSFG). The NPA 2 motif lies at 185–187 (NPA). Residues 192–203 (PAVVMNRFSPSH) are Extracellular-facing. Residues 204–224 (WVFWVGPIVGAAVAAILYFYL) traverse the membrane as a helical segment. Over 225-265 (LFPNSLSLSERVAVVKGTYESEEDWEEQREERKKTMELTAH) the chain is Cytoplasmic.

This sequence belongs to the MIP/aquaporin (TC 1.A.8) family. As to quaternary structure, homotetramer; each monomer provides an independent water pore. Interacts with TRPV4; the interaction is probably indirect and regulates TRPV4 activation by hypotonicity.

Its subcellular location is the apical cell membrane. It localises to the cell membrane. The protein resides in the cytoplasmic vesicle membrane. The enzyme catalyses H2O(in) = H2O(out). Functionally, aquaporins form homotetrameric transmembrane channels, with each monomer independently mediating water transport across the plasma membrane along its osmotic gradient. Plays an important role in fluid secretion in salivary glands. Required for TRPV4 activation by hypotonicity. Together with TRPV4, controls regulatory volume decrease in salivary epithelial cells. Seems to play a redundant role in water transport in the eye, lung and in sweat glands. This chain is Aquaporin-5, found in Sus scrofa (Pig).